The chain runs to 468 residues: Ribulose bisphosphate carboxylase large chain (468 aa).

N6,N6,N6-trimethyllysine is present on lysine 5. 2 residues coordinate substrate: asparagine 114 and threonine 164. Catalysis depends on lysine 166, which acts as the Proton acceptor. Lysine 168 is a substrate binding site. Lysine 192, aspartate 194, and glutamate 195 together coordinate Mg(2+). The residue at position 192 (lysine 192) is an N6-carboxylysine. Histidine 285 acts as the Proton acceptor in catalysis. 3 residues coordinate substrate: arginine 286, histidine 318, and serine 370.

It belongs to the RuBisCO large chain family. Type I subfamily. Heterohexadecamer of 8 large chains and 8 small chains; disulfide-linked. The disulfide link is formed within the large subunit homodimers. Mg(2+) serves as cofactor. In terms of processing, the disulfide bond which can form in the large chain dimeric partners within the hexadecamer appears to be associated with oxidative stress and protein turnover.

Its subcellular location is the plastid. The protein resides in the chloroplast. The enzyme catalyses 2 (2R)-3-phosphoglycerate + 2 H(+) = D-ribulose 1,5-bisphosphate + CO2 + H2O. The catalysed reaction is D-ribulose 1,5-bisphosphate + O2 = 2-phosphoglycolate + (2R)-3-phosphoglycerate + 2 H(+). Its function is as follows. RuBisCO catalyzes two reactions: the carboxylation of D-ribulose 1,5-bisphosphate, the primary event in carbon dioxide fixation, as well as the oxidative fragmentation of the pentose substrate in the photorespiration process. Both reactions occur simultaneously and in competition at the same active site. This Datura stramonium (Jimsonweed) protein is Ribulose bisphosphate carboxylase large chain.